The chain runs to 289 residues: Probable endonuclease 4 (289 aa).

Residues His76, His116, Glu152, Asp186, His189, His220, Asp233, His235, and Glu265 each coordinate Zn(2+).

It belongs to the AP endonuclease 2 family. The cofactor is Zn(2+).

It carries out the reaction Endonucleolytic cleavage to 5'-phosphooligonucleotide end-products.. Its function is as follows. Endonuclease IV plays a role in DNA repair. It cleaves phosphodiester bonds at apurinic or apyrimidinic (AP) sites, generating a 3'-hydroxyl group and a 5'-terminal sugar phosphate. This chain is Probable endonuclease 4, found in Malacoplasma penetrans (strain HF-2) (Mycoplasma penetrans).